Consider the following 61-residue polypeptide: Large ribosomal subunit protein uL30 (61 aa).

Belongs to the universal ribosomal protein uL30 family. In terms of assembly, part of the 50S ribosomal subunit.

In Methylococcus capsulatus (strain ATCC 33009 / NCIMB 11132 / Bath), this protein is Large ribosomal subunit protein uL30.